Reading from the N-terminus, the 150-residue chain is Meiotic expression up-regulated protein 15 (150 aa).

This is Meiotic expression up-regulated protein 15 (meu15) from Schizosaccharomyces pombe (strain 972 / ATCC 24843) (Fission yeast).